A 352-amino-acid chain; its full sequence is N-acetyl-gamma-glutamyl-phosphate reductase (352 aa).

Cys156 is an active-site residue.

It belongs to the NAGSA dehydrogenase family. Type 1 subfamily.

Its subcellular location is the cytoplasm. It catalyses the reaction N-acetyl-L-glutamate 5-semialdehyde + phosphate + NADP(+) = N-acetyl-L-glutamyl 5-phosphate + NADPH + H(+). The protein operates within amino-acid biosynthesis; L-arginine biosynthesis; N(2)-acetyl-L-ornithine from L-glutamate: step 3/4. Functionally, catalyzes the NADPH-dependent reduction of N-acetyl-5-glutamyl phosphate to yield N-acetyl-L-glutamate 5-semialdehyde. In Afipia carboxidovorans (strain ATCC 49405 / DSM 1227 / KCTC 32145 / OM5) (Oligotropha carboxidovorans), this protein is N-acetyl-gamma-glutamyl-phosphate reductase.